Reading from the N-terminus, the 709-residue chain is Polyribonucleotide nucleotidyltransferase (709 aa).

Asp491 and Asp497 together coordinate Mg(2+). Residues 557–617 (PKSESFMIPP…ENLQKAKTFI (61 aa)) enclose the KH domain. The S1 motif domain occupies 641-709 (GERFVGKIKK…KNKVELGLVE (69 aa)).

Belongs to the polyribonucleotide nucleotidyltransferase family. Mg(2+) serves as cofactor.

Its subcellular location is the cytoplasm. It carries out the reaction RNA(n+1) + phosphate = RNA(n) + a ribonucleoside 5'-diphosphate. Its function is as follows. Involved in mRNA degradation. Catalyzes the phosphorolysis of single-stranded polyribonucleotides processively in the 3'- to 5'-direction. In Helicobacter hepaticus (strain ATCC 51449 / 3B1), this protein is Polyribonucleotide nucleotidyltransferase.